Consider the following 264-residue polypeptide: Glucosamine-6-phosphate deaminase (264 aa).

The Proton acceptor; for enolization step role is filled by Asp-67. Residue Asn-136 is the For ring-opening step of the active site. His-138 (proton acceptor; for ring-opening step) is an active-site residue. Residue Glu-143 is the For ring-opening step of the active site.

The protein belongs to the glucosamine/galactosamine-6-phosphate isomerase family. NagB subfamily. As to quaternary structure, homohexamer.

It carries out the reaction alpha-D-glucosamine 6-phosphate + H2O = beta-D-fructose 6-phosphate + NH4(+). It functions in the pathway amino-sugar metabolism; N-acetylneuraminate degradation; D-fructose 6-phosphate from N-acetylneuraminate: step 5/5. Functionally, catalyzes the reversible isomerization-deamination of glucosamine 6-phosphate (GlcN6P) to form fructose 6-phosphate (Fru6P) and ammonium ion. The polypeptide is Glucosamine-6-phosphate deaminase (Shewanella woodyi (strain ATCC 51908 / MS32)).